A 1113-amino-acid polypeptide reads, in one-letter code: StAR-related lipid transfer protein 13 (1113 aa).

M1 is subject to N-acetylmethionine. The 68-residue stretch at 55–122 (QQEIEAKEAC…LNKCASMRLD (68 aa)) folds into the SAM domain. Disordered stretches follow at residues 164–218 (PVAD…HSAD), 230–256 (SSLP…RTRA), and 308–343 (NGDL…STVS). Residues 179–188 (NTASSESVLT) show a composition bias toward polar residues. Over residues 197–214 (SIHSESSGGSDSRSQSGH) the composition is skewed to low complexity. Polar residues predominate over residues 230–245 (SSLPQSTREGLNQSFH). Over residues 322–340 (GLPCSSKSSGESSPLENSS) the composition is skewed to low complexity. S411 carries the post-translational modification Phosphoserine. 2 stretches are compositionally biased toward polar residues: residues 421–435 (SNGV…SLGR) and 529–549 (PNQV…TTPS). Disordered regions lie at residues 421-443 (SNGV…GMRE) and 514-578 (HSTL…GASL). In terms of domain architecture, Rho-GAP spans 663–868 (VPLIVHVQRT…HMITECNRLF (206 aa)). One can recognise an START domain in the interval 899–1109 (LAESGATFHT…SFQPLVAEGP (211 aa)).

As to quaternary structure, homodimer. Interacts with TAX1BP1.

It is found in the cytoplasm. The protein localises to the membrane. It localises to the mitochondrion membrane. Its subcellular location is the lipid droplet. May function as a GTPase-activating protein. The sequence is that of StAR-related lipid transfer protein 13 (Stard13) from Mus musculus (Mouse).